We begin with the raw amino-acid sequence, 1861 residues long: Polyketide synthase 2 (1861 aa).

One can recognise a Ketosynthase family 3 (KS3) domain in the interval 109 to 525 (DSKIAIIGMS…GGNSALLLED (417 aa)). Active-site for beta-ketoacyl synthase activity residues include Cys264, His399, and His441. Residues 626-931 (GFVFSGQGAQ…PSLHRKDDGW (306 aa)) form a malonyl-CoA:ACP transacylase (MAT) domain region. Catalysis depends on Ser716, which acts as the For acyl/malonyl transferase activity. Positions 1008–1312 (TSSVQKVIQQ…VFGGMTVLPP (305 aa)) are product template (PT) domain. The segment at 1012–1146 (QKVIQQTDGP…CILRFADPKS (135 aa)) is N-terminal hotdog fold. The 307-residue stretch at 1012-1318 (QKVIQQTDGP…VLPPRRGADA (307 aa)) folds into the PKS/mFAS DH domain. His1045 acts as the Proton acceptor; for dehydratase activity in catalysis. A C-terminal hotdog fold region spans residues 1174-1318 (DSLLSKGIVY…VLPPRRGADA (145 aa)). Asp1232 functions as the Proton donor; for dehydratase activity in the catalytic mechanism. The Carrier 1 domain maps to 1356-1433 (SPQSGAIHRI…ELRLFLAADQ (78 aa)). An O-(pantetheine 4'-phosphoryl)serine modification is found at Ser1393. The disordered stretch occupies residues 1441-1470 (CESSNGQHTPQTSDKGSGTLTAQKPDHDTD). Positions 1442–1462 (ESSNGQHTPQTSDKGSGTLTA) are enriched in polar residues. Positions 1472–1546 (EMTLNRVCAI…SLQKTLRGTE (75 aa)) constitute a Carrier 2 domain. Ser1506 carries the post-translational modification O-(pantetheine 4'-phosphoryl)serine. The interval 1582-1855 (ASAPHATSIL…IIEMSNLIGD (274 aa)) is thioesterase (TE) domain. The active-site For thioesterase activity is Ser1685.

In terms of biological role, polyketide synthase; part of the Pks2 gene cluster that mediates the formation of infectious structures (appressoria), enabling these fungi to kill insects faster. The product of the Pks2 gene cluster is different from the one of Pks1 and has still not been identified. The chain is Polyketide synthase 2 from Metarhizium acridum (strain CQMa 102).